The sequence spans 954 residues: Patched domain-containing protein 3 (954 aa).

The segment covering 1-20 (MPWVEPKPRPGPEQKPKLTK) has biased composition (basic and acidic residues). The tract at residues 1 to 103 (MPWVEPKPRP…APLPEEETPE (103 aa)) is disordered. The segment covering 42–57 (QPPPGPLAPPKSPEPS) has biased composition (pro residues). Positions 90–102 (ELDDAPLPEEETP) are enriched in acidic residues. A helical transmembrane segment spans residues 139-159 (WIFLLAPLMLTAALGTGFLYL). N-linked (GlcNAc...) asparagine glycosylation is found at Asn-192, Asn-275, and Asn-279. The next 7 membrane-spanning stretches (helical) occupy residues 297–317 (LTGFFGGYILGGSLGMGQLLL), 383–403 (VIPVFHLAYILIILFAVTSCF), 423–443 (FLAVVSGFGLLLHIGVPFVII), 447–467 (SPFLILGVGVDDMFIMISAWH), 486–506 (AAVSITITTITNILALYTGIM), 520–540 (GMTLLFCYFYNITCFGAFMAL), and 603–623 (YFVVFIYVLYIISSIYGCFHV). An SSD domain is found at 383–540 (VIPVFHLAYI…ITCFGAFMAL (158 aa)). 3 N-linked (GlcNAc...) asparagine glycosylation sites follow: Asn-678, Asn-692, and Asn-737. 5 helical membrane passes run 804-824 (VLVASAAMFIVSLLLIPYPLC), 826-846 (LWVTFAIGSVIVGVTGFMAFW), 858-878 (LVICIGFSFDFSVHISYAFVS), 894-914 (LLGYPVLQSAISTIIGVCVLA), and 927-947 (IMFLVMIFGAAHGLIFIPVFL).

The protein belongs to the patched family. As to expression, expressed in germ cells of the testis (at protein level). Detected in blood lymph, colon, small intestine, ovary, testis, prostate, thymus and spleen with highest levels in testis.

The protein localises to the cell projection. It localises to the cilium. Its subcellular location is the flagellum membrane. It is found in the endoplasmic reticulum membrane. May play a role in sperm development or sperm function. However, does not appear to have an essential role in spermatogenesis or male fertility. The polypeptide is Patched domain-containing protein 3 (PTCHD3) (Homo sapiens (Human)).